We begin with the raw amino-acid sequence, 231 residues long: MKILGRWLKLLLLGLIGLFLVWQLWLLGWVLLWGWVNPGETRFMAIRLAELRQKVPEAQLKQQWVPYERISIHLKRAIIAAEDAKFVDHEGFDWEGIQKAMEKNQKKGRFVAGGSTISQQLAKNLFLTPTKSYFRKVEEAIITLMLENLWSKKRIFEVYLNVIEWGNGVFGAEAAARHYYNTSAAQLGPEQAARLAGMVPNPRYYDRNRSAQGLGRKTAIILARMPAADVP.

Residues 10–30 (LLLLGLIGLFLVWQLWLLGWV) traverse the membrane as a helical segment.

Belongs to the glycosyltransferase 51 family.

Its subcellular location is the cell inner membrane. The catalysed reaction is [GlcNAc-(1-&gt;4)-Mur2Ac(oyl-L-Ala-gamma-D-Glu-L-Lys-D-Ala-D-Ala)](n)-di-trans,octa-cis-undecaprenyl diphosphate + beta-D-GlcNAc-(1-&gt;4)-Mur2Ac(oyl-L-Ala-gamma-D-Glu-L-Lys-D-Ala-D-Ala)-di-trans,octa-cis-undecaprenyl diphosphate = [GlcNAc-(1-&gt;4)-Mur2Ac(oyl-L-Ala-gamma-D-Glu-L-Lys-D-Ala-D-Ala)](n+1)-di-trans,octa-cis-undecaprenyl diphosphate + di-trans,octa-cis-undecaprenyl diphosphate + H(+). The protein operates within cell wall biogenesis; peptidoglycan biosynthesis. Functionally, peptidoglycan polymerase that catalyzes glycan chain elongation from lipid-linked precursors. This chain is Biosynthetic peptidoglycan transglycosylase, found in Dechloromonas aromatica (strain RCB).